The sequence spans 442 residues: MENAKMNSLIAQYPLVKDLVALKETTWFNPGTTSLAEGLPYVGLTEQDVQDAHARLSRFAPYLAKAFPETAATGGIIESELVAIPAMQKRLEKEYQQPISGQLLLKKDSHLPISGSIKARGGIYEVLAHAEKLALEAGLLTLDDDYSKLLSPEFKQFFSQYSIAVGSTGNLGLSIGIMSARIGFKVTVHMSADARAWKKAKLRSHGVTVVEYEQDYGVAVEEGRKAAQSDPNCFFIDDENSRTLFLGYSVAGQRLKAQFAQQGSIVDADNPLFVYLPCGVGGGPGGVAFGLKLAFGDHVHCFFAEPTHSPCMLLGVHTGLHDQISVQDIGIDNLTAADGLAVGRASGFVGRAMERLLDGFYTLSDQTMYDMLGWLAQEEGIRLEPSALAGMAGPQRVCASVSYQQMHGFSAEQLRNTTHLVWATGGGMVPEEEMNQYLAKGR.

At K118 the chain carries N6-(pyridoxal phosphate)lysine.

This sequence belongs to the serine/threonine dehydratase family. DsdA subfamily. Monomer. Pyridoxal 5'-phosphate is required as a cofactor.

It carries out the reaction D-serine = pyruvate + NH4(+). The polypeptide is D-serine dehydratase (Escherichia coli (strain 55989 / EAEC)).